We begin with the raw amino-acid sequence, 453 residues long: Armadillo repeat-containing X-linked protein 1 (453 aa).

Residues 1 to 6 lie on the Mitochondrial intermembrane side of the membrane; the sequence is MGRTRE. Mitochondrion outer membrane (MOM)-targeting sequence regions lie at residues 1–6 and 26–36; these read MGRTRE and RLAWGRDENEK. A helical; Signal-anchor transmembrane segment spans residues 7–29; that stretch reads AGCVAAGVVIGAGACYCVYRLAW. The Cytoplasmic segment spans residues 30–453; sequence GRDENEKIWD…VKVLKVLTKL (424 aa). Disordered regions lie at residues 58–77 and 132–182; these read AKTN…SEVK and ISGN…RAPA. The segment covering 167–177 has biased composition (basic residues); that stretch reads GKSKGKARSKS. ARM repeat units lie at residues 195 to 235, 237 to 276, 358 to 398, and 415 to 453; these read PYKI…NNAA, SFNQ…NLSV, PAMT…NIND, and SSLF…LTKL.

This sequence belongs to the eutherian X-chromosome-specific Armcx family. Interacts with MIRO1. As to expression, expressed at high levels ovary, heart, testis, prostate, brain, spleen and colon. Expressed at very low levels in liver and thymus. Not expressed in peripheral blood leukocytes. Not or reduced expressed in lung, prostate, colon, pancreas and ovarian carcinomas.

Its subcellular location is the mitochondrion. The protein resides in the mitochondrion outer membrane. In terms of biological role, regulates mitochondrial transport during axon regeneration. Increases the proportion of motile mitochondria by recruiting stationary mitochondria into the motile pool. Enhances mitochondria movement and neurite growth in both adult axons and embryonic neurons. Promotes neuronal survival and axon regeneration after nerve injury. May link mitochondria to the Trak1-kinesin motor complex via its interaction with MIRO1. In Homo sapiens (Human), this protein is Armadillo repeat-containing X-linked protein 1 (ARMCX1).